The sequence spans 188 residues: ATP-dependent protease subunit HslV (188 aa).

Thr-8 is a catalytic residue. The Na(+) site is built by Ala-165, Cys-168, and Thr-171.

Belongs to the peptidase T1B family. HslV subfamily. A double ring-shaped homohexamer of HslV is capped on each side by a ring-shaped HslU homohexamer. The assembly of the HslU/HslV complex is dependent on binding of ATP.

Its subcellular location is the cytoplasm. It carries out the reaction ATP-dependent cleavage of peptide bonds with broad specificity.. Its activity is regulated as follows. Allosterically activated by HslU binding. Its function is as follows. Protease subunit of a proteasome-like degradation complex believed to be a general protein degrading machinery. The chain is ATP-dependent protease subunit HslV from Neorickettsia sennetsu (strain ATCC VR-367 / Miyayama) (Ehrlichia sennetsu).